A 449-amino-acid chain; its full sequence is Transcription factor AP-2 gamma (449 aa).

A Glycyl lysine isopeptide (Lys-Gly) (interchain with G-Cter in SUMO) cross-link involves residue Lys-10. Positions 13 to 58 (EDCEDRHDSSSNGNPRIPHLSSPGQHLYSPAPPLSHTGVAEYQPPP) are disordered. A PPxY motif motif is present at residues 59-64 (YFPPPY). The tract at residues 94–130 (AATGSQQQAWPGRQSQEGSSLASHHSRSASLIPHISG) is disordered. A compositionally biased stretch (polar residues) spans 95–111 (ATGSQQQAWPGRQSQEG). Low complexity predominate over residues 112–124 (SSLASHHSRSASL). Ser-251 is modified (phosphoserine; by PKA). An H-S-H (helix-span-helix), dimerization region spans residues 292–423 (RRKAAHVTLL…YIKEALIAID (132 aa)). Residues 426–449 (YMNPGDQSPADSSKTMEKMEKHRK) are disordered. Position 433 is a phosphoserine (Ser-433). The segment covering 439 to 449 (KTMEKMEKHRK) has biased composition (basic and acidic residues).

This sequence belongs to the AP-2 family. In terms of assembly, binds DNA as a dimer. Can form homodimers or heterodimers with other AP-2 family members. Interacts with WWOX. Interacts with UBE2I. Interacts with KCTD1; this interaction represses transcription activation. Interacts with CITED2 (via C-terminus); the interaction stimulates TFAP2B-transcriptional activity. Interacts with CITED4. Interacts with MTA1. Post-translationally, sumoylated on Lys-10; which inhibits transcriptional activity. Expressed in lung, ovary and testis. Expressed in most squamous epithelia. Also, detected in several exocrine glands including the prostate, the preputial and salivary glands, serous glands of the tongue and ocular harderian glands.

The protein localises to the nucleus. Functionally, sequence-specific DNA-binding transcription factor that interacts with cellular enhancer elements to regulate transcription of selected genes, and which plays a key role in early embryonic development. AP-2 factors bind to the consensus sequence 5'-GCCNNNGGC-3' and activate genes involved in a large spectrum of important biological functions. TFAP2C plays a key role in early embryonic development by regulating both inner cell mass (ICM) and trophectoderm differentiation. At the 8-cell stage, during morula development, controls expression of cell-polarity genes. Upon trophoblast commitment, binds to late trophectoderm genes in blastocysts together with CDX2, and later to extra-embryonic ectoderm genes together with SOX2. Binds to both closed and open chromatin with other transcription factors. This is Transcription factor AP-2 gamma from Mus musculus (Mouse).